A 326-amino-acid polypeptide reads, in one-letter code: Phospho-N-acetylmuramoyl-pentapeptide-transferase (326 aa).

Transmembrane regions (helical) follow at residues 3 to 23 (ISIS…PAFI), 51 to 71 (TMGG…FALF), 79 to 99 (VGMI…DDFL), 115 to 135 (LALQ…GGDI), 138 to 158 (VFGY…FWLV), 169 to 189 (GVDG…GVIA), 195 to 215 (MDIL…FIFN), 221 to 243 (VFMG…MALH), and 306 to 326 (FFFW…LYLM).

It belongs to the glycosyltransferase 4 family. MraY subfamily. The cofactor is Mg(2+).

The protein resides in the cell membrane. The enzyme catalyses UDP-N-acetyl-alpha-D-muramoyl-L-alanyl-gamma-D-glutamyl-L-lysyl-D-alanyl-D-alanine + di-trans,octa-cis-undecaprenyl phosphate = Mur2Ac(oyl-L-Ala-gamma-D-Glu-L-Lys-D-Ala-D-Ala)-di-trans,octa-cis-undecaprenyl diphosphate + UMP. The protein operates within cell wall biogenesis; peptidoglycan biosynthesis. Catalyzes the initial step of the lipid cycle reactions in the biosynthesis of the cell wall peptidoglycan: transfers peptidoglycan precursor phospho-MurNAc-pentapeptide from UDP-MurNAc-pentapeptide onto the lipid carrier undecaprenyl phosphate, yielding undecaprenyl-pyrophosphoryl-MurNAc-pentapeptide, known as lipid I. The sequence is that of Phospho-N-acetylmuramoyl-pentapeptide-transferase from Streptococcus pneumoniae serotype 19F (strain G54).